The sequence spans 126 residues: Heavy metal-associated isoprenylated plant protein 14 (126 aa).

Residues 3-69 enclose the HMA domain; the sequence is AKNAVLQLSI…LCNTEIVSVD (67 aa). Cys123 carries the cysteine methyl ester modification. Residue Cys123 is the site of S-farnesyl cysteine attachment. Residues 124-126 constitute a propeptide, removed in mature form; the sequence is VIM.

This sequence belongs to the HIPP family.

Its function is as follows. Probable heavy-metal-binding protein. This chain is Heavy metal-associated isoprenylated plant protein 14, found in Arabidopsis thaliana (Mouse-ear cress).